Here is a 395-residue protein sequence, read N- to C-terminus: [LysW]-aminoadipate semialdehyde transaminase (395 aa).

Pyridoxal 5'-phosphate-binding positions include 113-114 (GT) and Phe140. Residue Arg143 participates in substrate binding. 225 to 228 (DEIQ) contacts pyridoxal 5'-phosphate. Lys254 is modified (N6-(pyridoxal phosphate)lysine). Thr282 provides a ligand contact to substrate. Thr283 provides a ligand contact to pyridoxal 5'-phosphate.

It belongs to the class-III pyridoxal-phosphate-dependent aminotransferase family. LysJ subfamily. In terms of assembly, homodimer. The cofactor is pyridoxal 5'-phosphate.

The protein resides in the cytoplasm. It carries out the reaction [amino-group carrier protein]-C-terminal-gamma-(L-lysyl)-L-glutamate + 2-oxoglutarate = [amino-group carrier protein]-C-terminal-N-(1-carboxy-5-oxopentan-1-yl)-L-glutamine + L-glutamate. It functions in the pathway amino-acid biosynthesis; L-lysine biosynthesis via AAA pathway; L-lysine from L-alpha-aminoadipate (Thermus route): step 4/5. In terms of biological role, catalyzes the transfer of the amino group of L-glutamate to [LysW]-aminoadipate 6-semialdehyde, generating [LysW]-gamma-L-lysine. The sequence is that of [LysW]-aminoadipate semialdehyde transaminase from Thermus thermophilus (strain ATCC 27634 / DSM 579 / HB8).